The chain runs to 217 residues: ATP phosphoribosyltransferase (217 aa).

Belongs to the ATP phosphoribosyltransferase family. Short subfamily. Heteromultimer composed of HisG and HisZ subunits.

The protein resides in the cytoplasm. It carries out the reaction 1-(5-phospho-beta-D-ribosyl)-ATP + diphosphate = 5-phospho-alpha-D-ribose 1-diphosphate + ATP. It functions in the pathway amino-acid biosynthesis; L-histidine biosynthesis; L-histidine from 5-phospho-alpha-D-ribose 1-diphosphate: step 1/9. Catalyzes the condensation of ATP and 5-phosphoribose 1-diphosphate to form N'-(5'-phosphoribosyl)-ATP (PR-ATP). Has a crucial role in the pathway because the rate of histidine biosynthesis seems to be controlled primarily by regulation of HisG enzymatic activity. This chain is ATP phosphoribosyltransferase, found in Burkholderia multivorans (strain ATCC 17616 / 249).